Reading from the N-terminus, the 174-residue chain is Dehydratase AgnL8 (174 aa).

Residues Y24, Y44, and F47 each coordinate substrate. Active-site residues include H79 and H104.

Belongs to the scytalone dehydratase family. As to quaternary structure, homotrimer. Each subunit contains an active site, located in the central part of the hydrophobic core of the monomer, which functions independently.

Its pathway is secondary metabolite biosynthesis. Functionally, dehydratase; part of the gene cluster that mediates the biosynthesis of agnestins, dihydroxy-xanthone metabolites. The pathway begins with the assembly and cyclization of atrochrysone thioester by the non-reducing polyketide synthase Agnpks1. The atrochrysone carboxyl ACP thioesterase AgnL7 then breaks the thioester bond and releases the atrochrysone carboxylic acid as the first enzyme-free intermediate. The decarboxylase AgnL1 then catalyzes the concerted decarboxylation-elimination required to convert atochrysone carboxylic acid into emodin anthrone, which is further oxidized to emodin by the anthrone oxygenase AgnL2. Emodin then undergoes reduction catalyzed by the oxidoreductase AgnL4 to yield the dihydroquinone tautomer which is the substrate for reduction by the short chain dehydrogenase AgnL6 reduction to produce hydroxyketone, followed by AgnL8 dehydration and likely spontaneous autoxidation to chrysophanol. Baeyer-Villiger oxidation by the oxidase AgnL3 leads to monodictyphenone via cleavage of the C-10/C-10a bond of chrysophanol. Alternative cleavage at the C-4a/C-10 bond of chrysophanol also leads to the formation some cephalone F. Further conversion to agnestins A and B, requires reduction to dihydro-monodictyphenone, oxidation to agnestin C probably via an epoxide, and rearrangement to either agnestin A or agnestin B directly, although agnestin A or agnestin B can also interconvert. Within the cluster, AgnR1 is the only unassigned oxidoreductase present which could be involved in this conversion. However, AgnR1 seems not to be involved in this step, and thus genes involved in the proposed oxidation/reduction may be located elsewhere on the genome. Further agnestin A derivatives are probably formed by spontaneous decarboxylations, dehydrations and methanolysis reactions. This chain is Dehydratase AgnL8, found in Paecilomyces divaricatus (Penicillium divaricatum).